A 305-amino-acid chain; its full sequence is Methionyl-tRNA formyltransferase (305 aa).

108-111 (SLLP) provides a ligand contact to (6S)-5,6,7,8-tetrahydrofolate.

It belongs to the Fmt family.

The enzyme catalyses L-methionyl-tRNA(fMet) + (6R)-10-formyltetrahydrofolate = N-formyl-L-methionyl-tRNA(fMet) + (6S)-5,6,7,8-tetrahydrofolate + H(+). Attaches a formyl group to the free amino group of methionyl-tRNA(fMet). The formyl group appears to play a dual role in the initiator identity of N-formylmethionyl-tRNA by promoting its recognition by IF2 and preventing the misappropriation of this tRNA by the elongation apparatus. The protein is Methionyl-tRNA formyltransferase of Clavibacter michiganensis subsp. michiganensis (strain NCPPB 382).